The chain runs to 380 residues: Transaldolase (380 aa).

Residue K141 is the Schiff-base intermediate with substrate of the active site.

The protein belongs to the transaldolase family. Type 2 subfamily.

It is found in the cytoplasm. It catalyses the reaction D-sedoheptulose 7-phosphate + D-glyceraldehyde 3-phosphate = D-erythrose 4-phosphate + beta-D-fructose 6-phosphate. It functions in the pathway carbohydrate degradation; pentose phosphate pathway; D-glyceraldehyde 3-phosphate and beta-D-fructose 6-phosphate from D-ribose 5-phosphate and D-xylulose 5-phosphate (non-oxidative stage): step 2/3. Its function is as follows. Transaldolase is important for the balance of metabolites in the pentose-phosphate pathway. This chain is Transaldolase, found in Trichodesmium erythraeum (strain IMS101).